The sequence spans 240 residues: MAESREDCVFLSKLAEQSERYDEMVQYMKQVAALNTELSVEERNLLSVAYKNVIGSRRASWRIITSLEQKEQAKGNDKHVEIIKGYRAKIEDELAKYCDDVLKVIKENLLPNASTSESKVFYKKMEGDYYRYYAEFTVDEKRQEVADKSLAAYTEATEISNADLAPTHPIRLGLALNFSVFYYEIMNDADKACQLAKQAFDDSIAKLDEVPESSYKDSTLIMQLLRDNLTLWTSDTADEE.

The protein belongs to the 14-3-3 family. Interacts with coactosin. Interacts with ACTO/actophorin.

It is found in the cytoplasm. It localises to the cell projection. Its subcellular location is the phagocytic cup. Adapter protein which is required for phagocytosis and motility, probably by regulating actin cytoskeleton dynamics. During phagocytosis, plays a role in the initiation and/or formation of the phagocytic cup and is involved in the recruitment of the actin binding protein coactosin to the phagocytic cup. The sequence is that of 14-3-3 protein 3 from Entamoeba histolytica (strain ATCC 30459 / HM-1:IMSS / ABRM).